The sequence spans 264 residues: Agamous-like MADS-box protein AGL15 (264 aa).

The MADS-box domain maps to arginine 3–phenylalanine 57. Residues asparagine 87–phenylalanine 177 form the K-box domain. A disordered region spans residues leucine 223–valine 264. Over residues glutamate 230–proline 244 the composition is skewed to basic and acidic residues. Residues serine 245–threonine 257 show a composition bias toward low complexity.

Its subcellular location is the nucleus. Probable transcription factor. The polypeptide is Agamous-like MADS-box protein AGL15 (AGL15) (Brassica napus (Rape)).